We begin with the raw amino-acid sequence, 496 residues long: Glycerol kinase (496 aa).

ADP is bound at residue Thr-12. Positions 12, 13, and 14 each coordinate ATP. Thr-12 is a binding site for sn-glycerol 3-phosphate. Residue Arg-16 coordinates ADP. Sn-glycerol 3-phosphate-binding residues include Arg-82, Glu-83, and Tyr-134. Positions 82, 83, and 134 each coordinate glycerol. At His-230 the chain carries Phosphohistidine; by HPr. Asp-244 serves as a coordination point for sn-glycerol 3-phosphate. Residues Asp-244 and Gln-245 each coordinate glycerol. ADP-binding residues include Thr-266 and Gly-309. Residues Thr-266, Gly-309, Gln-313, and Gly-410 each contribute to the ATP site. 2 residues coordinate ADP: Gly-410 and Asn-414.

This sequence belongs to the FGGY kinase family. In terms of assembly, homotetramer and homodimer (in equilibrium). Post-translationally, the phosphoenolpyruvate-dependent sugar phosphotransferase system (PTS), including enzyme I, and histidine-containing protein (HPr) are required for the phosphorylation, which leads to the activation of the enzyme.

It catalyses the reaction glycerol + ATP = sn-glycerol 3-phosphate + ADP + H(+). It functions in the pathway polyol metabolism; glycerol degradation via glycerol kinase pathway; sn-glycerol 3-phosphate from glycerol: step 1/1. With respect to regulation, activated by phosphorylation and inhibited by fructose 1,6-bisphosphate (FBP). Key enzyme in the regulation of glycerol uptake and metabolism. Catalyzes the phosphorylation of glycerol to yield sn-glycerol 3-phosphate. This Bacillus cereus (strain G9842) protein is Glycerol kinase.